The primary structure comprises 445 residues: Exodeoxyribonuclease 7 large subunit (445 aa).

Belongs to the XseA family. In terms of assembly, heterooligomer composed of large and small subunits.

Its subcellular location is the cytoplasm. The enzyme catalyses Exonucleolytic cleavage in either 5'- to 3'- or 3'- to 5'-direction to yield nucleoside 5'-phosphates.. In terms of biological role, bidirectionally degrades single-stranded DNA into large acid-insoluble oligonucleotides, which are then degraded further into small acid-soluble oligonucleotides. This is Exodeoxyribonuclease 7 large subunit from Nautilia profundicola (strain ATCC BAA-1463 / DSM 18972 / AmH).